Consider the following 263-residue polypeptide: 5'-nucleotidase SurE (263 aa).

Asp-15, Asp-16, Ser-46, and Asn-102 together coordinate a divalent metal cation.

This sequence belongs to the SurE nucleotidase family. It depends on a divalent metal cation as a cofactor.

Its subcellular location is the cytoplasm. It carries out the reaction a ribonucleoside 5'-phosphate + H2O = a ribonucleoside + phosphate. Functionally, nucleotidase that shows phosphatase activity on nucleoside 5'-monophosphates. This is 5'-nucleotidase SurE from Chlorobaculum tepidum (strain ATCC 49652 / DSM 12025 / NBRC 103806 / TLS) (Chlorobium tepidum).